A 78-amino-acid polypeptide reads, in one-letter code: Acyl carrier protein (78 aa).

The Carrier domain occupies 2-77 (SDIEARVKKI…NAIDYANTHQ (76 aa)). Serine 37 carries the O-(pantetheine 4'-phosphoryl)serine modification.

This sequence belongs to the acyl carrier protein (ACP) family. 4'-phosphopantetheine is transferred from CoA to a specific serine of apo-ACP by AcpS. This modification is essential for activity because fatty acids are bound in thioester linkage to the sulfhydryl of the prosthetic group.

Its subcellular location is the cytoplasm. It functions in the pathway lipid metabolism; fatty acid biosynthesis. Functionally, carrier of the growing fatty acid chain in fatty acid biosynthesis. The protein is Acyl carrier protein of Comamonas testosteroni (Pseudomonas testosteroni).